A 408-amino-acid chain; its full sequence is Cytochrome P450 55A3 (408 aa).

Cys357 provides a ligand contact to heme.

Belongs to the cytochrome P450 family. The cofactor is heme.

This is Cytochrome P450 55A3 (CYP55A3) from Fusarium lichenicola (Cylindrocarpon lichenicola).